Here is a 231-residue protein sequence, read N- to C-terminus: Large ribosomal subunit protein uL1 (231 aa).

The protein belongs to the universal ribosomal protein uL1 family. Part of the 50S ribosomal subunit.

Binds directly to 23S rRNA. The L1 stalk is quite mobile in the ribosome, and is involved in E site tRNA release. Its function is as follows. Protein L1 is also a translational repressor protein, it controls the translation of the L11 operon by binding to its mRNA. This Kosmotoga olearia (strain ATCC BAA-1733 / DSM 21960 / TBF 19.5.1) protein is Large ribosomal subunit protein uL1.